The following is a 224-amino-acid chain: CASP-like protein 3A1 (224 aa).

Topologically, residues 1 to 59 are cytoplasmic; it reads MMMNGQKLAPAAEVAVQLPESKVAADNISGTMSGPLVGASGGGTTAAMRPFGRKAEVMH. The helical transmembrane segment at 60–80 threads the bilayer; it reads VLLRLLCIITSVAALSFMFTA. Topologically, residues 81–106 are extracellular; that stretch reads QQSSTISIYGFMLPVQSKWSFSHSFE. The chain crosses the membrane as a helical span at residues 107-127; that stretch reads YLVGVSAAVAAHSLLQLLISM. Residues 128–142 are Cytoplasmic-facing; that stretch reads SRLLRKSPVIPSRSH. A helical membrane pass occupies residues 143–163; it reads AWLIFAGDQVFAYAMISAGAA. Residues 164–192 lie on the Extracellular side of the membrane; that stretch reads ASGVTNLNRTGIQHTALPNFCKPLQSFCD. A glycan (N-linked (GlcNAc...) asparagine) is linked at N171. The chain crosses the membrane as a helical span at residues 193-213; it reads HVAVSIFFTFTSCFLLAASAV. Residues 214–224 are Cytoplasmic-facing; the sequence is QEVIWLSRSKY.

Belongs to the Casparian strip membrane proteins (CASP) family. As to quaternary structure, homodimer and heterodimers.

It is found in the cell membrane. The chain is CASP-like protein 3A1 from Populus trichocarpa (Western balsam poplar).